We begin with the raw amino-acid sequence, 210 residues long: Putative fructokinase-8 (210 aa).

Belongs to the carbohydrate kinase PfkB family.

It catalyses the reaction D-fructose + ATP = D-fructose 6-phosphate + ADP + H(+). Its pathway is glycan biosynthesis; starch biosynthesis. In terms of biological role, may play an important role in maintaining the flux of carbon towards starch formation. This is Putative fructokinase-8 from Arabidopsis thaliana (Mouse-ear cress).